Consider the following 159-residue polypeptide: 2-C-methyl-D-erythritol 2,4-cyclodiphosphate synthase (159 aa).

Residues aspartate 8 and histidine 10 each coordinate a divalent metal cation. Residues 8–10 and 34–35 contribute to the 4-CDP-2-C-methyl-D-erythritol 2-phosphate site; these read DVH and HS. Histidine 42 lines the a divalent metal cation pocket. 4-CDP-2-C-methyl-D-erythritol 2-phosphate contacts are provided by residues 56-58, 61-65, 100-106, 132-135, phenylalanine 139, and arginine 142; these read DIG, FPDTD, AQAPKML, and TTTE.

The protein belongs to the IspF family. Homotrimer. It depends on a divalent metal cation as a cofactor.

It carries out the reaction 4-CDP-2-C-methyl-D-erythritol 2-phosphate = 2-C-methyl-D-erythritol 2,4-cyclic diphosphate + CMP. The protein operates within isoprenoid biosynthesis; isopentenyl diphosphate biosynthesis via DXP pathway; isopentenyl diphosphate from 1-deoxy-D-xylulose 5-phosphate: step 4/6. Its function is as follows. Involved in the biosynthesis of isopentenyl diphosphate (IPP) and dimethylallyl diphosphate (DMAPP), two major building blocks of isoprenoid compounds. Catalyzes the conversion of 4-diphosphocytidyl-2-C-methyl-D-erythritol 2-phosphate (CDP-ME2P) to 2-C-methyl-D-erythritol 2,4-cyclodiphosphate (ME-CPP) with a corresponding release of cytidine 5-monophosphate (CMP). This is 2-C-methyl-D-erythritol 2,4-cyclodiphosphate synthase from Salmonella arizonae (strain ATCC BAA-731 / CDC346-86 / RSK2980).